The chain runs to 173 residues: Interferon gamma (173 aa).

A signal peptide spans 1 to 22 (MNATHCILALQLCLLAISGCSS). The residue at position 23 (Q23) is a Pyrrolidone carboxylic acid. N38 and N105 each carry an N-linked (GlcNAc...) asparagine glycan.

The protein belongs to the type II (or gamma) interferon family. Homodimer. Interacts with IFNGR1 (via extracellular domain); this interaction promotes IFNGR1 dimerization. In terms of tissue distribution, released primarily from activated T lymphocytes.

It is found in the secreted. In terms of biological role, type II interferon produced by immune cells such as T-cells and NK cells that plays crucial roles in antimicrobial, antiviral, and antitumor responses by activating effector immune cells and enhancing antigen presentation. Primarily signals through the JAK-STAT pathway after interaction with its receptor IFNGR1 to affect gene regulation. Upon IFNG binding, IFNGR1 intracellular domain opens out to allow association of downstream signaling components JAK2, JAK1 and STAT1, leading to STAT1 activation, nuclear translocation and transcription of IFNG-regulated genes. Many of the induced genes are transcription factors such as IRF1 that are able to further drive regulation of a next wave of transcription. Plays a role in class I antigen presentation pathway by inducing a replacement of catalytic proteasome subunits with immunoproteasome subunits. In turn, increases the quantity, quality, and repertoire of peptides for class I MHC loading. Increases the efficiency of peptide generation also by inducing the expression of activator PA28 that associates with the proteasome and alters its proteolytic cleavage preference. Up-regulates as well MHC II complexes on the cell surface by promoting expression of several key molecules such as cathepsins B/CTSB, H/CTSH, and L/CTSL. Participates in the regulation of hematopoietic stem cells during development and under homeostatic conditions by affecting their development, quiescence, and differentiation. The sequence is that of Interferon gamma (IFNG) from Meriones unguiculatus (Mongolian jird).